A 567-amino-acid chain; its full sequence is Proline--tRNA ligase (567 aa).

It belongs to the class-II aminoacyl-tRNA synthetase family. ProS type 1 subfamily. Homodimer.

Its subcellular location is the cytoplasm. The enzyme catalyses tRNA(Pro) + L-proline + ATP = L-prolyl-tRNA(Pro) + AMP + diphosphate. Catalyzes the attachment of proline to tRNA(Pro) in a two-step reaction: proline is first activated by ATP to form Pro-AMP and then transferred to the acceptor end of tRNA(Pro). As ProRS can inadvertently accommodate and process non-cognate amino acids such as alanine and cysteine, to avoid such errors it has two additional distinct editing activities against alanine. One activity is designated as 'pretransfer' editing and involves the tRNA(Pro)-independent hydrolysis of activated Ala-AMP. The other activity is designated 'posttransfer' editing and involves deacylation of mischarged Ala-tRNA(Pro). The misacylated Cys-tRNA(Pro) is not edited by ProRS. In Streptomyces griseus subsp. griseus (strain JCM 4626 / CBS 651.72 / NBRC 13350 / KCC S-0626 / ISP 5235), this protein is Proline--tRNA ligase.